We begin with the raw amino-acid sequence, 547 residues long: Chaperonin GroEL (547 aa).

Residues 30–33 (TLGP), K51, 87–91 (DGTTT), G415, 479–481 (NAA), and D495 each bind ATP. The interval 525–547 (PKEDSPGAGAGMGGMGGMGGMDM) is disordered. Gly residues predominate over residues 532–547 (AGAGMGGMGGMGGMDM).

The protein belongs to the chaperonin (HSP60) family. In terms of assembly, forms a cylinder of 14 subunits composed of two heptameric rings stacked back-to-back. Interacts with the co-chaperonin GroES.

It localises to the cytoplasm. It catalyses the reaction ATP + H2O + a folded polypeptide = ADP + phosphate + an unfolded polypeptide.. Its function is as follows. Together with its co-chaperonin GroES, plays an essential role in assisting protein folding. The GroEL-GroES system forms a nano-cage that allows encapsulation of the non-native substrate proteins and provides a physical environment optimized to promote and accelerate protein folding. The protein is Chaperonin GroEL of Nitrosomonas europaea (strain ATCC 19718 / CIP 103999 / KCTC 2705 / NBRC 14298).